Here is an 80-residue protein sequence, read N- to C-terminus: Small ribosomal subunit protein uS17 (80 aa).

This sequence belongs to the universal ribosomal protein uS17 family. As to quaternary structure, part of the 30S ribosomal subunit.

Its function is as follows. One of the primary rRNA binding proteins, it binds specifically to the 5'-end of 16S ribosomal RNA. The protein is Small ribosomal subunit protein uS17 of Brucella abortus (strain S19).